The following is a 291-amino-acid chain: 33 kDa chaperonin (291 aa).

Disulfide bonds link Cys-229–Cys-231 and Cys-262–Cys-265.

Belongs to the HSP33 family. Under oxidizing conditions two disulfide bonds are formed involving the reactive cysteines. Under reducing conditions zinc is bound to the reactive cysteines and the protein is inactive.

The protein resides in the cytoplasm. Its function is as follows. Redox regulated molecular chaperone. Protects both thermally unfolding and oxidatively damaged proteins from irreversible aggregation. Plays an important role in the bacterial defense system toward oxidative stress. In Vibrio parahaemolyticus serotype O3:K6 (strain RIMD 2210633), this protein is 33 kDa chaperonin.